Here is a 173-residue protein sequence, read N- to C-terminus: NAD(P)H-quinone oxidoreductase subunit I, chloroplastic (173 aa).

4Fe-4S ferredoxin-type domains follow at residues 55 to 84 and 95 to 124; these read GRIH…VDWD and RSYS…MTEE. [4Fe-4S] cluster is bound by residues cysteine 64, cysteine 67, cysteine 70, cysteine 74, cysteine 104, cysteine 107, cysteine 110, and cysteine 114.

The protein belongs to the complex I 23 kDa subunit family. NDH is composed of at least 16 different subunits, 5 of which are encoded in the nucleus. [4Fe-4S] cluster is required as a cofactor.

The protein resides in the plastid. Its subcellular location is the chloroplast thylakoid membrane. It catalyses the reaction a plastoquinone + NADH + (n+1) H(+)(in) = a plastoquinol + NAD(+) + n H(+)(out). The enzyme catalyses a plastoquinone + NADPH + (n+1) H(+)(in) = a plastoquinol + NADP(+) + n H(+)(out). Functionally, NDH shuttles electrons from NAD(P)H:plastoquinone, via FMN and iron-sulfur (Fe-S) centers, to quinones in the photosynthetic chain and possibly in a chloroplast respiratory chain. The immediate electron acceptor for the enzyme in this species is believed to be plastoquinone. Couples the redox reaction to proton translocation, and thus conserves the redox energy in a proton gradient. This is NAD(P)H-quinone oxidoreductase subunit I, chloroplastic from Nephroselmis olivacea (Green alga).